The sequence spans 282 residues: Phosphate import ATP-binding protein PstB (282 aa).

A disordered region spans residues 1–33 (MNMAETQLNPIARPTAPAGFDPAQSGQSQAPSR). One can recognise an ABC transporter domain in the interval 36–277 (IEINDLNFFY…PVRKETEDYI (242 aa)). 68-75 (GPSGCGKS) contacts ATP.

Belongs to the ABC transporter superfamily. Phosphate importer (TC 3.A.1.7) family. The complex is composed of two ATP-binding proteins (PstB), two transmembrane proteins (PstC and PstA) and a solute-binding protein (PstS).

The protein localises to the cell inner membrane. It carries out the reaction phosphate(out) + ATP + H2O = ADP + 2 phosphate(in) + H(+). Its function is as follows. Part of the ABC transporter complex PstSACB involved in phosphate import. Responsible for energy coupling to the transport system. This Paraburkholderia xenovorans (strain LB400) protein is Phosphate import ATP-binding protein PstB.